Consider the following 263-residue polypeptide: Receptor-transporting protein 1 (263 aa).

Residues 1–238 (MRIFRPWRLR…ETGSGWNFCS (238 aa)) are Cytoplasmic-facing. The 3CxxC-type zinc finger occupies 88–197 (ASGRFHCSWC…GEFCEACQEG (110 aa)). Residues 239 to 259 (IPWCLFWATVLLLIIYLQLSF) form a helical membrane-spanning segment. Over 260–263 (RSSV) the chain is Extracellular.

The protein belongs to the TMEM7 family. As to quaternary structure, interacts with olfactory receptors.

Its subcellular location is the cell membrane. Specifically promotes functional cell surface expression of olfactory receptors, but not of other GPCRs. This Macaca fascicularis (Crab-eating macaque) protein is Receptor-transporting protein 1 (RTP1).